Here is a 375-residue protein sequence, read N- to C-terminus: Succinyl-diaminopimelate desuccinylase (375 aa).

A Zn(2+)-binding site is contributed by histidine 66. Aspartate 68 is an active-site residue. Residue aspartate 99 participates in Zn(2+) binding. The Proton acceptor role is filled by glutamate 133. Positions 134, 162, and 348 each coordinate Zn(2+).

The protein belongs to the peptidase M20A family. DapE subfamily. As to quaternary structure, homodimer. Zn(2+) serves as cofactor. The cofactor is Co(2+).

It catalyses the reaction N-succinyl-(2S,6S)-2,6-diaminopimelate + H2O = (2S,6S)-2,6-diaminopimelate + succinate. The protein operates within amino-acid biosynthesis; L-lysine biosynthesis via DAP pathway; LL-2,6-diaminopimelate from (S)-tetrahydrodipicolinate (succinylase route): step 3/3. In terms of biological role, catalyzes the hydrolysis of N-succinyl-L,L-diaminopimelic acid (SDAP), forming succinate and LL-2,6-diaminopimelate (DAP), an intermediate involved in the bacterial biosynthesis of lysine and meso-diaminopimelic acid, an essential component of bacterial cell walls. The polypeptide is Succinyl-diaminopimelate desuccinylase (Pectobacterium atrosepticum (strain SCRI 1043 / ATCC BAA-672) (Erwinia carotovora subsp. atroseptica)).